Here is a 142-residue protein sequence, read N- to C-terminus: Large ribosomal subunit protein uL13 (142 aa).

Belongs to the universal ribosomal protein uL13 family. As to quaternary structure, part of the 50S ribosomal subunit.

Functionally, this protein is one of the early assembly proteins of the 50S ribosomal subunit, although it is not seen to bind rRNA by itself. It is important during the early stages of 50S assembly. This Cronobacter sakazakii (strain ATCC BAA-894) (Enterobacter sakazakii) protein is Large ribosomal subunit protein uL13.